A 782-amino-acid polypeptide reads, in one-letter code: Protein NEDD1 (782 aa).

8 WD repeats span residues 1-34 (MMSNLVEPSWRLLAASGGDTVKLFDVSADSGDPC), 41-80 (SPGCAVNSVKWNHTNLVVASTGEDKKISLWRKNGQSLGTV), 90-130 (SAEE…CIKK), 133-172 (GHTSTITGVMYNCKDEHLASVSVGGDLIVHNLASGARATE), 176-216 (PNGQ…PKMS), 220-260 (QHSA…SSSC), 262-301 (AYEAPFSSLAFGDNGYILVAGTSNGRVVFYDIRGKPQPVT), and 307-358 (SNSE…TPSA). Disordered stretches follow at residues 350 to 393 (PLPS…WPSG) and 467 to 512 (PIFD…EAWG). 3 stretches are compositionally biased toward polar residues: residues 352-362 (PSTTPSASQSA), 370-386 (VSASTVNASSVEQTPNR), and 488-498 (SFGSITPTASS). Positions 753–782 (VLSSILENQAEQMKELKLLRKENQELRQRL) form a coiled coil.

Expressed in root meristematic cells.

It localises to the nucleus envelope. The protein resides in the chromosome. Its subcellular location is the centromere. It is found in the kinetochore. The protein localises to the cytoplasm. It localises to the cytoskeleton. The protein resides in the phragmoplast. Its subcellular location is the microtubule organizing center. Functionally, regulates microtubules organization in a centrosome-independent manner. Required for the spindle to be positioned correctly and for the function of gamma-tubulin in organizing phragmoplast microtubules. Component of active gamma-tubulin ring complexes (gamma-TuRCs) associated with cortical microtubules in interphase cells. Mediates gamma-TuRC recruitment to the nucleation sites and is important for determining the ratio of branched to parallel nucleation. May mediate the localization of GCP2 and GCP3 to the nuclear envelope. The polypeptide is Protein NEDD1 (Arabidopsis thaliana (Mouse-ear cress)).